Here is a 245-residue protein sequence, read N- to C-terminus: tRNA pseudouridine synthase A 2 (245 aa).

The active-site Nucleophile is the Asp53. A substrate-binding site is contributed by Tyr111.

Belongs to the tRNA pseudouridine synthase TruA family. As to quaternary structure, homodimer.

The enzyme catalyses uridine(38/39/40) in tRNA = pseudouridine(38/39/40) in tRNA. Functionally, formation of pseudouridine at positions 38, 39 and 40 in the anticodon stem and loop of transfer RNAs. The protein is tRNA pseudouridine synthase A 2 of Bacillus cereus (strain ZK / E33L).